A 583-amino-acid chain; its full sequence is Ankyrin repeat and SOCS box protein 15 (583 aa).

11 ANK repeats span residues 75–104 (KGWFPLHEAVVQPIQQILETVLDASYKTLW), 110–139 (DGETPLTLAVKAGLVENVKTLLDKGVWPNT), 143–172 (KGETPLLIAIKRGSYDMVSALIKYNTSLDQ), 176–205 (KRWSAMHEAAKQGRKDIITLLLNHRGNVHL), 209–238 (FGVTPLGVAAEYGHCDVLEHLIHKGGDVFA), 242–271 (DGASVLFEAAGGGNPDCISLLLKYGGSGNV), 275–304 (AGHLPIHRAAYEGHYLALKYLIPVTSKHAI), 307–336 (SGLTPIHSAAEGQNAQCLELLIENGFDVNA), 349–378 (ERKTALYFAVSNNDIHCTEVLLAAGADPNL), 379–408 (DPLNCLLVAVRANRHEIVRLLLSYGANVNC), and 416–444 (TRFPSAIQYALNDEIMLRLLLNNGYQVEL). The 56-residue stretch at 524–579 (WPEIRQIIENPCSLKHLCRLKIRRVMGLQRLCQPASIQMLPLPAAMRRYLLFKEFD) folds into the SOCS box domain.

This sequence belongs to the ankyrin SOCS box (ASB) family.

It participates in protein modification; protein ubiquitination. In terms of biological role, may be a substrate-recognition component of a SCF-like ECS (Elongin-Cullin-SOCS-box protein) E3 ubiquitin-protein ligase complex which mediates the ubiquitination and subsequent proteasomal degradation of target proteins. The sequence is that of Ankyrin repeat and SOCS box protein 15 (Asb15) from Mus musculus (Mouse).